Here is a 172-residue protein sequence, read N- to C-terminus: Ribosome maturation factor RimM (172 aa).

Residues 96–168 form the PRC barrel domain; that stretch reads EGEFYYHQII…RVDVELMEGL (73 aa).

Belongs to the RimM family. As to quaternary structure, binds ribosomal protein uS19.

Its subcellular location is the cytoplasm. An accessory protein needed during the final step in the assembly of 30S ribosomal subunit, possibly for assembly of the head region. Essential for efficient processing of 16S rRNA. May be needed both before and after RbfA during the maturation of 16S rRNA. It has affinity for free ribosomal 30S subunits but not for 70S ribosomes. The chain is Ribosome maturation factor RimM from Streptococcus pyogenes serotype M28 (strain MGAS6180).